A 422-amino-acid chain; its full sequence is MKISLLGHGKTTLALARFFKKNHNEVKFFDDQFTSFHKDREGFLCHPSKDFNPNDSQLEVVSPGISFTHPLVIKAKHLVSEYDYIDSLFDLVFTPTIISISGTNGKTTTTEMLTMLLEDFKAVSGGNIGTPLIELFEKQSPLWVLETSSFSLHYTNKAYPLIYLLINVEADHLTWHCNFENYLNAKLKVLTLMPKTSLAIIPLKFKEHPIIQNSQAQKIFFDKSEEILECLKIPSNALFFKGAFLLDAALALLVYEQFLKIKNLKWQDYRENALKRLNAFKIGSHKMEEFRDKQGRLWVDDSKATNIDATLQALKTFKNQKIHLIVGGDIKGVNLTPLFEEFKNHEVSLYAIGSSASIIQALALEFNVSCQVCLKLEKAVQEIKSVLSQNEIALLSPSAASLDQFSSYKERGEKFKAFVLKD.

102–108 (GTNGKTT) contacts ATP.

The protein belongs to the MurCDEF family.

It localises to the cytoplasm. The catalysed reaction is UDP-N-acetyl-alpha-D-muramoyl-L-alanine + D-glutamate + ATP = UDP-N-acetyl-alpha-D-muramoyl-L-alanyl-D-glutamate + ADP + phosphate + H(+). The protein operates within cell wall biogenesis; peptidoglycan biosynthesis. Functionally, cell wall formation. Catalyzes the addition of glutamate to the nucleotide precursor UDP-N-acetylmuramoyl-L-alanine (UMA). The protein is UDP-N-acetylmuramoylalanine--D-glutamate ligase of Helicobacter pylori (strain HPAG1).